The chain runs to 120 residues: V-type proton ATPase subunit F (120 aa).

Belongs to the V-ATPase F subunit family. V-ATPase is a heteromultimeric enzyme composed of a peripheral catalytic V1 complex (components A to H) attached to an integral membrane V0 proton pore complex (components: a, c, c', c'', d, e, f and VOA1).

Its subcellular location is the vacuole membrane. In terms of biological role, subunit of the V1 complex of vacuolar(H+)-ATPase (V-ATPase), a multisubunit enzyme composed of a peripheral complex (V1) that hydrolyzes ATP and a membrane integral complex (V0) that translocates protons. V-ATPase is responsible for acidifying and maintaining the pH of intracellular compartments. In Schizosaccharomyces pombe (strain 972 / ATCC 24843) (Fission yeast), this protein is V-type proton ATPase subunit F.